The chain runs to 868 residues: MADVTVKQLAQVVGIPVERLLNQLQEAGLSFTDDQQTVNEEQKRILLNHLKGSSNRDISAAPERITLRRKSMSQVTVGHDMHSGKTVNIEVRKKKTFIKRSAIPEQAEIEEPVVPPVVEEPVHEEITVVSEVSAETPELKETEEHPVIEPVAELDETVKEEEKISLEENTAESQDELTHANTDVIENLVDVVEEAIPASKKEEVKPEKVSKKKHLEQTDSDISEFKKGKKKPKYHTFEHDEEEQELHRRGGRSKFKKKKGTEKSDKYREAEETLTHGFALPTAPIVREVLIPETITVAELAKRMSVKAAEVIKVMMSLGAMATINQVIDQETSVIVVEEMGHKPVIIKEDAVETGLGEAISKGTKTEGRAPVVTIMGHVDHGKTSLLDYIRRTKVAAGEAGGITQHIGAYHVSTPKGNITFLDTPGHAAFTAMRARGAQATDIVILIVAADDGVKPQTIEAIQHAKAAKVPIIVAINKMDKPDADPERVMNELSVQEVIPEAWGGDTMFVNISAKSGMGIDDLLDAILLQSEVLELKAVTDGAAKGVVIESRLDKGRGPVATVLVQSGTLHKGDILLAGFQYGRVRALVSDNGDLVDSAGPSIPVEVLGLSAIPHAGDEAVVVPDEKKAREVALFRQGRFRDVKLARRQKTSIEGIMENMTATESKVLNIVLKADVQGSLEAISDALTKLSTDEVKVEVISSGVGGITESDVHLAIASNAILIGFNVRADGTAKRLAEQESVSIHYYSVIYDIVDQIKGALTGMLAPQFKEEIVGIAEVRDVFKSPKIGAIAGCMVIEGVVKRNNPIRVLRSNVVIYEGTLESLRRFKDDVLEVRQGFECGIGVKNYNDVKPGDLIEVFETVEIKRDL.

Positions 199–209 (SKKEEVKPEKV) are enriched in basic and acidic residues. The interval 199-269 (SKKEEVKPEK…GTEKSDKYRE (71 aa)) is disordered. Residues 249–260 (RGGRSKFKKKKG) are compositionally biased toward basic residues. The 170-residue stretch at 368–537 (GRAPVVTIMG…LLQSEVLELK (170 aa)) folds into the tr-type G domain. The G1 stretch occupies residues 377–384 (GHVDHGKT). 377–384 (GHVDHGKT) lines the GTP pocket. The G2 stretch occupies residues 402–406 (GITQH). Positions 423 to 426 (DTPG) are G3. GTP contacts are provided by residues 423-427 (DTPGH) and 477-480 (NKMD). The segment at 477–480 (NKMD) is G4. A G5 region spans residues 513–515 (SAK).

Belongs to the TRAFAC class translation factor GTPase superfamily. Classic translation factor GTPase family. IF-2 subfamily.

It is found in the cytoplasm. One of the essential components for the initiation of protein synthesis. Protects formylmethionyl-tRNA from spontaneous hydrolysis and promotes its binding to the 30S ribosomal subunits. Also involved in the hydrolysis of GTP during the formation of the 70S ribosomal complex. In Legionella pneumophila (strain Paris), this protein is Translation initiation factor IF-2.